Consider the following 100-residue polypeptide: Putative septation protein SpoVG (100 aa).

This sequence belongs to the SpoVG family.

Functionally, could be involved in septation. This is Putative septation protein SpoVG from Staphylococcus aureus (strain MRSA252).